The chain runs to 381 residues: Erythronate-4-phosphate dehydrogenase (381 aa).

2 residues coordinate substrate: Ser-45 and Thr-67. Residues 127–128 (QV), Asp-147, and Thr-176 each bind NAD(+). Arg-209 is an active-site residue. An NAD(+)-binding site is contributed by Asp-233. Residue Glu-238 is part of the active site. The active-site Proton donor is the His-255. Residue Gly-258 coordinates NAD(+). Tyr-259 contributes to the substrate binding site.

Belongs to the D-isomer specific 2-hydroxyacid dehydrogenase family. PdxB subfamily. In terms of assembly, homodimer.

It localises to the cytoplasm. It carries out the reaction 4-phospho-D-erythronate + NAD(+) = (R)-3-hydroxy-2-oxo-4-phosphooxybutanoate + NADH + H(+). It functions in the pathway cofactor biosynthesis; pyridoxine 5'-phosphate biosynthesis; pyridoxine 5'-phosphate from D-erythrose 4-phosphate: step 2/5. Catalyzes the oxidation of erythronate-4-phosphate to 3-hydroxy-2-oxo-4-phosphonooxybutanoate. The protein is Erythronate-4-phosphate dehydrogenase of Vibrio cholerae serotype O1 (strain ATCC 39315 / El Tor Inaba N16961).